The chain runs to 81 residues: Sulfur carrier protein TusA (81 aa).

Cysteine 19 (cysteine persulfide intermediate) is an active-site residue.

The protein belongs to the sulfur carrier protein TusA family. In terms of assembly, interacts with IscS.

The protein localises to the cytoplasm. It participates in tRNA modification. Sulfur carrier protein involved in sulfur trafficking in the cell. Part of a sulfur-relay system required for 2-thiolation during synthesis of 2-thiouridine of the modified wobble base 5-methylaminomethyl-2-thiouridine (mnm(5)s(2)U) in tRNA. Interacts with IscS and stimulates its cysteine desulfurase activity. Accepts an activated sulfur from IscS, which is then transferred to TusD, and thus determines the direction of sulfur flow from IscS to 2-thiouridine formation. Also appears to be involved in sulfur transfer for the biosynthesis of molybdopterin. This Escherichia coli O17:K52:H18 (strain UMN026 / ExPEC) protein is Sulfur carrier protein TusA.